The sequence spans 705 residues: MKPTCILCLLVVILLHPRISKSSTSGNPSASSSSSSPPEIPAFRQCETIRIEMCRKIGYNETSMPNLVGNEMQTDVEYTLQTFAPLIEYDCSSQLKLFLCAAYVPMCTPKAPVHAIGPCRSLCESVRIRCHPVLQGFGFPWPPALDCDKFPRENNHETMCMEGPGELHQPQQEQDLYGLPGQGIPGGLGGKLPMDCSGLAKSHLYVRLPRSGRCAPLCEADILFTPAEKHLAEIWVSTWAYAALGLALVATVCLLASDGSRLASAKWSRLLSPLIWCHNMVTLGWAVRFMVGRTGTACGTDPQAPNESLLTVDGLSNASCASVFLMRYYFGMAACAWWAVLCLGWHRDIRRHSPDSKGHVVIPSNFGGSPAKRNSAKTAQQDLTQNNFVCFVAWGLPAFQTSAVIVARFVDADELLGACFVGNQSDKALQILVATPVFCYWIFGSMNLISGYLVHCRTKEILRNSNALSVQQQLQQLSAHSSSGIGIFLFIYGLACAMLLLAVIYEFANIDVWLGSGDTNTPLWPFLLRAFMELMLGICCFAWVLGPSISTLYKRQVSNGKMVKHTSAGAATGHLDGHSSSRGSHAACNSTVVSYHSVRTSMASVPLPPSPYKLKTSPGTGSISLNQMSNYSLGRSVHHQQRHSPHHHHHQQQQHHQFHPHHNHQHHSTSSHRLYYPPGSYASQKYSQHGSYYPHLQQYGNETLL.

The signal sequence occupies residues 1 to 22 (MKPTCILCLLVVILLHPRISKS). The segment covering 21–37 (KSSTSGNPSASSSSSSP) has biased composition (low complexity). Residues 21-40 (KSSTSGNPSASSSSSSPPEI) form a disordered region. The Extracellular segment spans residues 23-233 (STSGNPSASS…FTPAEKHLAE (211 aa)). The 123-residue stretch at 41–163 (PAFRQCETIR…NNHETMCMEG (123 aa)) folds into the FZ domain. 5 disulfides stabilise this stretch: cysteine 46–cysteine 107, cysteine 54–cysteine 100, cysteine 91–cysteine 130, cysteine 119–cysteine 160, and cysteine 123–cysteine 147. Asparagine 60 is a glycosylation site (N-linked (GlcNAc...) asparagine). The chain crosses the membrane as a helical span at residues 234–254 (IWVSTWAYAALGLALVATVCL). Residues 255 to 270 (LASDGSRLASAKWSRL) lie on the Cytoplasmic side of the membrane. Residues 271-291 (LSPLIWCHNMVTLGWAVRFMV) traverse the membrane as a helical segment. Over 292–322 (GRTGTACGTDPQAPNESLLTVDGLSNASCAS) the chain is Extracellular. Asparagine 306 and asparagine 317 each carry an N-linked (GlcNAc...) asparagine glycan. The chain crosses the membrane as a helical span at residues 323 to 343 (VFLMRYYFGMAACAWWAVLCL). The Cytoplasmic portion of the chain corresponds to 344 to 386 (GWHRDIRRHSPDSKGHVVIPSNFGGSPAKRNSAKTAQQDLTQN). The chain crosses the membrane as a helical span at residues 387 to 407 (NFVCFVAWGLPAFQTSAVIVA). At 408–430 (RFVDADELLGACFVGNQSDKALQ) the chain is on the extracellular side. An N-linked (GlcNAc...) asparagine glycan is attached at asparagine 423. Residues 431 to 451 (ILVATPVFCYWIFGSMNLISG) traverse the membrane as a helical segment. The Cytoplasmic segment spans residues 452-483 (YLVHCRTKEILRNSNALSVQQQLQQLSAHSSS). A helical membrane pass occupies residues 484 to 504 (GIGIFLFIYGLACAMLLLAVI). Topologically, residues 505-529 (YEFANIDVWLGSGDTNTPLWPFLLR) are extracellular. Residues 530-550 (AFMELMLGICCFAWVLGPSIS) form a helical membrane-spanning segment. Residues 551 to 705 (TLYKRQVSNG…LQQYGNETLL (155 aa)) lie on the Cytoplasmic side of the membrane. Residues 635-681 (RSVHHQQRHSPHHHHHQQQQHHQFHPHHNHQHHSTSSHRLYYPPGSY) form a disordered region. The segment covering 636 to 670 (SVHHQQRHSPHHHHHQQQQHHQFHPHHNHQHHSTS) has biased composition (basic residues). A PDZ-binding motif is present at residues 703–705 (TLL).

This sequence belongs to the G-protein coupled receptor Fz/Smo family.

It is found in the membrane. In terms of biological role, receptor for Wnt proteins. Most of frizzled receptors are coupled to the beta-catenin canonical signaling pathway, which leads to the activation of disheveled proteins, inhibition of GSK-3 kinase, nuclear accumulation of beta-catenin and activation of Wnt target genes. A second signaling pathway involving PKC and calcium fluxes has been seen for some family members, but it is not yet clear if it represents a distinct pathway or if it can be integrated in the canonical pathway, as PKC seems to be required for Wnt-mediated inactivation of GSK-3 kinase. Both pathways seem to involve interactions with G-proteins. May be involved in transduction and intercellular transmission of polarity information during tissue morphogenesis and/or in differentiated tissues. Required to coordinate the cytoskeletons of epidermal cells to produce a parallel array of cuticular hairs and bristles. The protein is Frizzled-4 (fz4) of Drosophila melanogaster (Fruit fly).